Reading from the N-terminus, the 437-residue chain is 3-phosphoshikimate 1-carboxyvinyltransferase (437 aa).

Residues K28, S29, and R33 each coordinate 3-phosphoshikimate. K28 serves as a coordination point for phosphoenolpyruvate. Phosphoenolpyruvate is bound by residues G97 and R125. Positions 168, 169, 170, 316, and 343 each coordinate 3-phosphoshikimate. Q170 serves as a coordination point for phosphoenolpyruvate. E316 (proton acceptor) is an active-site residue. Residues R347, R388, and K413 each coordinate phosphoenolpyruvate.

Belongs to the EPSP synthase family. Monomer.

Its subcellular location is the cytoplasm. It catalyses the reaction 3-phosphoshikimate + phosphoenolpyruvate = 5-O-(1-carboxyvinyl)-3-phosphoshikimate + phosphate. The protein operates within metabolic intermediate biosynthesis; chorismate biosynthesis; chorismate from D-erythrose 4-phosphate and phosphoenolpyruvate: step 6/7. Its function is as follows. Catalyzes the transfer of the enolpyruvyl moiety of phosphoenolpyruvate (PEP) to the 5-hydroxyl of shikimate-3-phosphate (S3P) to produce enolpyruvyl shikimate-3-phosphate and inorganic phosphate. This chain is 3-phosphoshikimate 1-carboxyvinyltransferase, found in Rhodococcus erythropolis (strain PR4 / NBRC 100887).